Here is a 728-residue protein sequence, read N- to C-terminus: Plakophilin-1 (728 aa).

Residues 1-235 are required for binding to single stranded DNA; it reads MNHSPLKTAL…SFGHSRASSK (235 aa). Residues 1 to 287 form a required for interaction with EIF4A1 region; that stretch reads MNHSPLKTAL…ESAKQQVYQL (287 aa). Residue Ser4 is modified to Phosphoserine; by RIPK4. Residues 48 to 69 form a disordered region; that stretch reads TVKRQKSKSSQSSTLSHSNRGS. Phosphorylation in this region is required for cytoplasmic localization and protein stabilization regions lie at residues 54-69 and 117-192; these read SKSS…NRGS and RFSS…STCS. Residue Ser119 is modified to Phosphoserine. Phosphoserine; by RIPK4 is present on Ser120. Ser122 carries the post-translational modification Phosphoserine. Ser143 bears the Phosphoserine; by RIPK4 mark. The tract at residues 161 to 270 is required for WNT-mediated nuclear localization; the sequence is YCDPRGTLRK…KYQAIGAYYI (110 aa). 9 ARM repeats span residues 244–275, 276–317, 318–360, 361–412, 413–443, 505–536, 537–583, 584–629, and 630–694; these read SGLT…HTCF, QDES…NLVF, RSTP…NLSS, TDEL…GCLR, NLSS…NCVA, NYDC…LNLM, GKSK…IARL, LQSG…SHTG, and NTSN…DMWA.

It belongs to the beta-catenin family. As to quaternary structure, part of a complex that contains DSG3, PKP1, YAP1 and YWHAG; the complex is required for localization of DSG3 and YAP1 to the cell membrane in keratinocytes. Interacts (via N-terminus) with KRT5/CK5, KRT8/CK8 (via rod domain), KRT15/CK15 and KRT18/CK18 (via rod domain) as part of intermediate filaments. Interacts with VIM (via rod domain). Interacts with DSP. Interacts with DES. Interacts with FXR1; the interaction may facilitate the binding of PKP1 to PKP2, PKP3 and DSP mRNA. Interacts (via N-terminus) with EIF4A1; the interaction promotes EIF4A1 recruitment to the cap-dependent translation complex and EIF4A1 ATPase activity. Interacts with TJP1/ZO-1; the interaction facilitates TJP1/ZO-1 localization to the plasma membrane. Interacts (when phosphorylated) with YWHAG; the interaction results in translocation of PKP1 to the cytoplasm and loss of intercellular adhesion in keratinocytes. In terms of processing, phosphorylated by AKT2; required for interaction with YWHAG and subsequent localization away from desmosomes to the cytoplasm. Phosphorylation of Ser-119 by AKT2 promotes PKP1-driven cap-dependent mRNA translation and decreases intercellular adhesion, phosphorylation is promoted by insulin. Phosphorylation by RIPK4 at the N-terminus is required for its role in differentiation of keratinocytes and DSG1 localization at cell junctions. In terms of tissue distribution, expressed in undifferentiated keratinocytes of the epidermis at birth, expression increases as differentiation proceeds (at protein level). Expressed in the cervical loop during early tooth differentiation, expression is then present between ameloblasts, at ameloblast-ameloblast junctions and in the stratum intermedium during pre-secretory and secretory stages of tooth development (at protein level).

It is found in the nucleus. The protein localises to the cytoplasm. Its subcellular location is the perinuclear region. It localises to the cell junction. The protein resides in the desmosome. It is found in the cell membrane. The protein localises to the stress granule. Its function is as follows. A component of desmosome cell-cell junctions which are required for positive regulation of cellular adhesion. Plays a role in desmosome protein expression regulation and localization to the desmosomal plaque, thereby maintaining cell sheet integrity and anchorage of desmosomes to intermediate filaments. Required for localization of DSG3 and YAP1 to the cell membrane in keratinocytes in response to mechanical strain, via the formation of an interaction complex composed of DSG3, YAP1, PKP1 and YWHAG. Positively regulates differentiation of keratinocytes, potentially via promoting localization of DSG1 at desmosome cell junctions. Required for calcium-independent development and maturation of desmosome plaques specifically at lateral cell-cell contacts in differentiating keratinocytes. Plays a role in the maintenance of DSG3 protein abundance, DSG3 clustering and localization of these clusters to the cell membrane in keratinocytes. May also promote keratinocyte proliferation and morphogenesis during postnatal development. Required for tight junction inside-out transepidermal barrier function of the skin, and is thereby involved in neonatal survival possibly via maintenance of hydration levels. Promotes Wnt-mediated proliferation and differentiation of ameloblasts, via facilitating TJP1/ZO-1 localization to tight junctions. Binds single-stranded DNA (ssDNA), and may thereby play a role in sensing DNA damage and promoting cell survival. Positively regulates cap-dependent translation and as a result cell proliferation, via recruitment of EIF4A1 to the initiation complex and promotion of EIF4A1 ATPase activity. Regulates the mRNA stability and protein abundance of desmosome components PKP2, PKP3, DSC2 and DSP, potentially via its interaction with FXR1. This chain is Plakophilin-1 (Pkp1), found in Mus musculus (Mouse).